Reading from the N-terminus, the 5405-residue chain is IgGFc-binding protein (5405 aa).

The N-terminal stretch at 1–23 (MGALWSWWILWAGATLLWGLTQE) is a signal peptide. An igGFc-binding region spans residues 24 to 450 (ASVDLKNTGR…EPSCEGMQCA (427 aa)). Residues N75 and N91 are each glycosylated (N-linked (GlcNAc...) asparagine). Residues 470-650 (AVCRAQGDPH…KLDDGDYLCE (181 aa)) form the VWFD 1 domain. 2 cysteine pairs are disulfide-bonded: C472–C611 and C494–C649. A TIL 1 domain is found at 745 to 799 (CPANSRYELCGPACPTSCNGAAAPSNCSGRPCVEGCVCLPGFVASGGACVPASSC). The VWFD 2 domain occupies 862–1041 (GTCQGSGDPH…WQEETRPGCG (180 aa)). Disulfide bonds link C864-C1003 and C886-C1040. Residues 1136 to 1189 (CPPHSHYEACSYGCPLSCGDLPVPGGCGSECHEGCVCDEGFALSGESCLPLASC) form the TIL 2 domain. The VWFD 3 domain maps to 1250–1429 (STCQASGDPH…EEVVPDSPCL (180 aa)). Intrachain disulfides connect C1252/C1390 and C1274/C1428. Residue N1317 is glycosylated (N-linked (GlcNAc...) (complex) asparagine). In terms of domain architecture, TIL 3 spans 1532–1585 (CPPNSHYELCADTCSLGCSALSAPPQCQDGCAEGCQCDSGFLYNGQACVPIQQC). Residues 1671 to 1854 (ATCWLWGDPH…RAPGWDPLCW (184 aa)) enclose the VWFD 4 domain. 3 cysteine pairs are disulfide-bonded: C1673/C1815, C1695/C1853, and C1704/C1812. N-linked (GlcNAc...) asparagine glycosylation occurs at N1743. In terms of domain architecture, TIL 4 spans 1950–2007 (CPENSHYEVCGSPCPASCPSPAPLTTPAVCEGPCVEGCQCDAGFVLSADRCVPLNNGC). One can recognise a VWFD 5 domain in the interval 2070–2253 (AECQAWGDPH…VSKPCPSPCT (184 aa)). 2 disulfides stabilise this stretch: C2072/C2211 and C2094/C2252. N-linked (GlcNAc...) asparagine glycosylation occurs at N2138. In terms of domain architecture, TIL 5 spans 2337–2390 (CPAHSHYELCGDSCPGSCPSLSAPEGCESACREGCVCDAGFVLSGDTCVPVGQC). Residues 2451 to 2630 (TTCQASGDPH…EEVVPDSPCL (180 aa)) enclose the VWFD 6 domain. 2 disulfide bridges follow: C2453–C2591 and C2475–C2629. N2518 is a glycosylation site (N-linked (GlcNAc...) asparagine). Residues 2733–2786 (CPQNSHYELCADTCSLGCSALSAPLQCPDGCAEGCQCDSGFLYNGQACVPIQQC) enclose the TIL 6 domain. A VWFD 7 domain is found at 2872–3055 (ATCWLWGDPH…RAPGWDPLCW (184 aa)). 3 disulfides stabilise this stretch: C2874–C3016, C2896–C3054, and C2905–C3013. Residues 3151–3208 (CPENSHYEVCGPPCPASCPSPAPLTTPAVCEGPCVEGCQCDAGFVLSADRCVPLNNGC) form the TIL 7 domain. Residues 3271–3454 (AECQAWGDPH…VSKPCPSPCT (184 aa)) form the VWFD 8 domain. Intrachain disulfides connect C3273–C3412 and C3295–C3453. The 54-residue stretch at 3538 to 3591 (CPAHSHYELCGDSCPGSCPSLSAPEGCESACREGCVCDAGFVLSGDTCVPVGQC) folds into the TIL 8 domain. The 180-residue stretch at 3652-3831 (TTCQASGDPH…EEVVPDSPCL (180 aa)) folds into the VWFD 9 domain. Cystine bridges form between C3654/C3792 and C3676/C3830. N-linked (GlcNAc...) asparagine glycosylation is present at N3719. Residues 3934-3987 (CPQNSHYELCADTCSLGCSALSAPLQCPDGCAEGCQCDSGFLYNGQACVPIQQC) enclose the TIL 9 domain. Residues 4073-4256 (ATCWLWGDPH…RAPGWDPLCW (184 aa)) form the VWFD 10 domain. Cystine bridges form between C4075–C4217, C4097–C4255, and C4106–C4214. N-linked (GlcNAc...) asparagine glycosylation is present at N4145. The TIL 10 domain occupies 4352–4409 (CPENSHYEVCGPPCPASCPSPAPLTTPAVCEGPCVEGCQCDAGFVLSADRCVPLNNGC). A VWFD 11 domain is found at 4472–4655 (AECQAWGDPH…VSKPCPSPCT (184 aa)). 2 disulfide bridges follow: C4474–C4613 and C4496–C4654. N4540 carries an N-linked (GlcNAc...) asparagine glycan. Residues 4739-4792 (CPAHSHYELCGDSCPVSCPSLSAPEGCESACREGCVCDAGFVLSGDTCVPVGQC) enclose the TIL 11 domain. The VWFD 12 domain occupies 4854–5025 (GRCLANGGIH…RAPGSSKGCG (172 aa)). 2 disulfide bridges follow: C4856-C4986 and C4878-C5024. The region spanning 5121-5174 (CPAHSHYSICTRTCQGSCAALSGLTGCTTRCFEGCECDDRFLLSQGVCIPVQDC) is the TIL 12 domain. The VWFD 13 domain maps to 5233 to 5404 (GLCVLSVGAN…WRAQDFSPCY (172 aa)). C5235 and C5372 are disulfide-bonded.

Interacts with the Fc portion of IgG and with MUC2. As to expression, mainly expressed in placenta and colon epithelium. Expressed in thyroid, and down-regulated in thyroid carcinomas. Present in serum, with higher levels in patients with various autoimmune diseases (at protein level).

Its subcellular location is the secreted. May be involved in the maintenance of the mucosal structure as a gel-like component of the mucosa. This chain is IgGFc-binding protein (FCGBP), found in Homo sapiens (Human).